We begin with the raw amino-acid sequence, 230 residues long: Stachydrine N-demethylase reductase subunit Stc3 (230 aa).

It belongs to the non-flavoprotein flavin reductase family. The system is probably composed of an oxygenase subunit (Stc2) and two reductase subunits (Stc3 and Stc4).

In terms of biological role, reductase involved in the catabolism of stachydrine (L-proline betaine), a source of carbon and nitrogen. Part of a Rieske-type oxygenase system that catalyzes the demethylation of stachydrine to produce N-methyl-L-proline (monomethylproline). This subunit is probably involved in the transfer of electrons from NAD(P)H to the catalytic subunit Stc2. This Rhizobium meliloti (strain 1021) (Ensifer meliloti) protein is Stachydrine N-demethylase reductase subunit Stc3.